An 817-amino-acid polypeptide reads, in one-letter code: Probable inorganic carbon transporter subunit DabA (817 aa).

Zn(2+) contacts are provided by Cys301, Asp303, His491, and Cys506. 2 disordered regions span residues 598 to 617 (NTSV…ERRA) and 794 to 817 (GWHA…GVPS).

The protein belongs to the inorganic carbon transporter (TC 9.A.2) DabA family. Forms a complex with DabB. Zn(2+) serves as cofactor.

The protein resides in the cell inner membrane. Part of an energy-coupled inorganic carbon pump. This chain is Probable inorganic carbon transporter subunit DabA, found in Salinibacter ruber (strain DSM 13855 / M31).